The chain runs to 966 residues: Protein mes-1 (966 aa).

Positions 1-19 are cleaved as a signal peptide; that stretch reads MKIHHFLTLLCTFLPLTTT. Residues 20-470 lie on the Extracellular side of the membrane; the sequence is ALTNSTPLSL…QASDIPTSVE (451 aa). Residues Asn62, Asn126, Asn183, Asn214, Asn251, and Asn372 are each glycosylated (N-linked (GlcNAc...) asparagine). The chain crosses the membrane as a helical span at residues 471–491; the sequence is LMAVVLATSAIFALIALFLLY. Topologically, residues 492 to 966 are cytoplasmic; the sequence is RKRKRDKKAR…FKSVNVAATV (475 aa). One can recognise a Protein kinase domain in the interval 656–966; sequence HNFNERIEKQ…FKSVNVAATV (311 aa). ATP-binding positions include 662–670 and Lys685; that span reads IEKQAYWLM.

Belongs to the protein kinase superfamily.

Its subcellular location is the cell membrane. Functionally, during early embryogenesis, controls asymmetric cell division and the asymmetric localization of P granules of germline precursor P2 and its descendant P3. Probably upstream of tyrosine kinase src-1, plays a role in endoderm development by controlling spindle orientation during EMS blastomere cell division. Controls EMS spindle orientation probably by promoting lin-5 and gpr-1/2 enrichment at, and let-99 exclusion from the junction between P2 and EMS cells. This chain is Protein mes-1, found in Caenorhabditis elegans.